Consider the following 545-residue polypeptide: Chaperonin GroEL 2 (545 aa).

Residues 29–32, 86–90, Gly-413, 479–481, and Asp-495 contribute to the ATP site; these read TLGP, DGTTT, and NAA.

Belongs to the chaperonin (HSP60) family. As to quaternary structure, forms a cylinder of 14 subunits composed of two heptameric rings stacked back-to-back. Interacts with the co-chaperonin GroES.

It localises to the cytoplasm. The catalysed reaction is ATP + H2O + a folded polypeptide = ADP + phosphate + an unfolded polypeptide.. Together with its co-chaperonin GroES, plays an essential role in assisting protein folding. The GroEL-GroES system forms a nano-cage that allows encapsulation of the non-native substrate proteins and provides a physical environment optimized to promote and accelerate protein folding. This Prochlorococcus marinus (strain MIT 9301) protein is Chaperonin GroEL 2.